Here is a 103-residue protein sequence, read N- to C-terminus: Large ribosomal subunit protein bL21 (103 aa).

The protein belongs to the bacterial ribosomal protein bL21 family. As to quaternary structure, part of the 50S ribosomal subunit. Contacts protein L20.

This protein binds to 23S rRNA in the presence of protein L20. This is Large ribosomal subunit protein bL21 from Dechloromonas aromatica (strain RCB).